Consider the following 403-residue polypeptide: Tryptophan synthase beta chain 1 (403 aa).

K96 is modified (N6-(pyridoxal phosphate)lysine).

This sequence belongs to the TrpB family. In terms of assembly, tetramer of two alpha and two beta chains. The cofactor is pyridoxal 5'-phosphate.

The catalysed reaction is (1S,2R)-1-C-(indol-3-yl)glycerol 3-phosphate + L-serine = D-glyceraldehyde 3-phosphate + L-tryptophan + H2O. It participates in amino-acid biosynthesis; L-tryptophan biosynthesis; L-tryptophan from chorismate: step 5/5. Functionally, the beta subunit is responsible for the synthesis of L-tryptophan from indole and L-serine. In Wolinella succinogenes (strain ATCC 29543 / DSM 1740 / CCUG 13145 / JCM 31913 / LMG 7466 / NCTC 11488 / FDC 602W) (Vibrio succinogenes), this protein is Tryptophan synthase beta chain 1 (trpB1).